We begin with the raw amino-acid sequence, 433 residues long: Inositol hexakisphosphate kinase 1 (433 aa).

The disordered stretch occupies residues 100–160 (ETVEQDDTPE…SPKVELHSHS (61 aa)). Positions 113-123 (PRRKHSRRSLH) are enriched in basic residues. Polar residues predominate over residues 139–149 (SFETSESSQEA). Residues 150–160 (KSPKVELHSHS) show a composition bias toward basic and acidic residues. Residue serine 151 is modified to Phosphoserine. 220-228 (PCVLDLKMG) lines the substrate pocket. The disordered stretch occupies residues 359–383 (EVPPPCGPSTSPSSTSLEAGPSSPP).

This sequence belongs to the inositol phosphokinase (IPK) family. Highly expressed in brain and testis. Detected at much lower levels in heart, kidney, liver, lung and spleen.

It is found in the cytoplasm. The protein localises to the nucleus. It catalyses the reaction 1D-myo-inositol hexakisphosphate + ATP = 5-diphospho-1D-myo-inositol 1,2,3,4,6-pentakisphosphate + ADP. The catalysed reaction is 1-diphospho-1D-myo-inositol 2,3,4,5,6-pentakisphosphate + ATP + H(+) = 1,5-bis(diphospho)-1D-myo-inositol 2,3,4,6-tetrakisphosphate + ADP. Functionally, converts inositol hexakisphosphate (InsP6) to diphosphoinositol pentakisphosphate (InsP7/PP-InsP5). Converts 1,3,4,5,6-pentakisphosphate (InsP5) to PP-InsP4. This is Inositol hexakisphosphate kinase 1 (Ip6k1) from Mus musculus (Mouse).